A 93-amino-acid polypeptide reads, in one-letter code: YcgL domain-containing protein VV1_0131 (93 aa).

Residues M1–K84 form the YcgL domain. A disordered region spans residues L72–D93.

This Vibrio vulnificus (strain CMCP6) protein is YcgL domain-containing protein VV1_0131.